A 549-amino-acid chain; its full sequence is Oxygen-dependent choline dehydrogenase (549 aa).

4–33 (DFVIIGSGSAGSAMASRLSEDGKHTVIVLE) serves as a coordination point for FAD. The Proton acceptor role is filled by His465.

It belongs to the GMC oxidoreductase family. It depends on FAD as a cofactor.

The catalysed reaction is choline + A = betaine aldehyde + AH2. It catalyses the reaction betaine aldehyde + NAD(+) + H2O = glycine betaine + NADH + 2 H(+). It participates in amine and polyamine biosynthesis; betaine biosynthesis via choline pathway; betaine aldehyde from choline (cytochrome c reductase route): step 1/1. Functionally, involved in the biosynthesis of the osmoprotectant glycine betaine. Catalyzes the oxidation of choline to betaine aldehyde and betaine aldehyde to glycine betaine at the same rate. This is Oxygen-dependent choline dehydrogenase from Rhizobium rhizogenes (strain K84 / ATCC BAA-868) (Agrobacterium radiobacter).